We begin with the raw amino-acid sequence, 245 residues long: Complement C1q subcomponent subunit A (245 aa).

The N-terminal stretch at 1-22 (MEGPRGWLVLCVLAISLASMVT) is a signal peptide. The segment covering 27 to 38 (RAPDGKKGEAGR) has biased composition (basic and acidic residues). The segment at 27-114 (RAPDGKKGEA…SPGNIKDQPR (88 aa)) is disordered. The region spanning 31–109 (GKKGEAGRPG…KGTKGSPGNI (79 aa)) is the Collagen-like domain. Residue K33 is modified to 5-hydroxylysine. A glycan (O-linked (Gal...) hydroxylysine) is linked at K33. Residues P39 and P45 each carry the 4-hydroxyproline modification. K48 is modified (5-hydroxylysine). An O-linked (Gal...) hydroxylysine glycan is attached at K48. A 4-hydroxyproline mark is found at P54 and P57. K67 is subject to 5-hydroxylysine. O-linked (Gal...) hydroxylysine glycosylation is present at K67. 3 positions are modified to 4-hydroxyproline: P73, P79, and P85. K100 carries the post-translational modification 5-hydroxylysine. K100 is a glycosylation site (O-linked (Gal...) hydroxylysine). Positions 110–245 (KDQPRPAFSA…FSGFLIFPSA (136 aa)) constitute a C1q domain. Residue N146 is glycosylated (N-linked (GlcNAc...) asparagine). C172 and C190 are disulfide-bonded. Q199 contributes to the Ca(2+) binding site.

As to quaternary structure, core component of the complement C1 complex, a calcium-dependent complex composed of 1 molecule of the C1Q subcomplex, 2 molecules of C1R and 2 molecules of C1S. The C1Q subcomplex is composed 18 subunits: 3 chains of C1QA, C1QB, and C1QC trimerize to form 6 collagen-like triple helices connected to six globular ligand-recognition modules (C1q domain). Interacts with CR1 (via Sushi 24 and Sushi 25 domains). Interacts (via C-terminus) with CD33; this interaction activates CD33 inhibitory motifs. (Microbial infection) Interacts with Staphylococcus aureus protein Cna; this interaction results in the inhibition of the classical complement pathway. O-linked glycans are assumed to be the Glc-Gal disaccharides typically found as secondary modifications of hydroxylated lysines in collagen-like domains.

It is found in the secreted. It localises to the cell surface. The C1Q subcomplex is inhibited by sulfated molecules, such as triterpenoid sulfates, heparan sulfate, or chondroitin sulfates. Functionally, core component of the complement C1 complex, a multiprotein complex that initiates the classical pathway of the complement system, a cascade of proteins that leads to phagocytosis and breakdown of pathogens and signaling that strengthens the adaptive immune system. The classical complement pathway is initiated by the C1Q subcomplex of the C1 complex, which specifically binds IgG or IgM immunoglobulins complexed with antigens, forming antigen-antibody complexes on the surface of pathogens: C1QA, together with C1QB and C1QC, specifically recognizes and binds the Fc regions of IgG or IgM via its C1q domain. Immunoglobulin-binding activates the proenzyme C1R, which cleaves C1S, initiating the proteolytic cascade of the complement system. The C1Q subcomplex is activated by a hexamer of IgG complexed with antigens, while it is activated by a pentameric IgM. The C1Q subcomplex also recognizes and binds phosphatidylserine exposed on the surface of cells undergoing programmed cell death, possibly promoting activation of the complement system. In Homo sapiens (Human), this protein is Complement C1q subcomponent subunit A.